A 558-amino-acid polypeptide reads, in one-letter code: Dihydroxy-acid dehydratase (558 aa).

Aspartate 78 serves as a coordination point for Mg(2+). Residue cysteine 119 coordinates [2Fe-2S] cluster. Positions 120 and 121 each coordinate Mg(2+). Lysine 121 is modified (N6-carboxylysine). Cysteine 192 is a binding site for [2Fe-2S] cluster. Glutamate 446 contacts Mg(2+). Serine 472 functions as the Proton acceptor in the catalytic mechanism.

The protein belongs to the IlvD/Edd family. Homodimer. It depends on [2Fe-2S] cluster as a cofactor. The cofactor is Mg(2+).

The catalysed reaction is (2R)-2,3-dihydroxy-3-methylbutanoate = 3-methyl-2-oxobutanoate + H2O. It catalyses the reaction (2R,3R)-2,3-dihydroxy-3-methylpentanoate = (S)-3-methyl-2-oxopentanoate + H2O. It functions in the pathway amino-acid biosynthesis; L-isoleucine biosynthesis; L-isoleucine from 2-oxobutanoate: step 3/4. The protein operates within amino-acid biosynthesis; L-valine biosynthesis; L-valine from pyruvate: step 3/4. Functionally, functions in the biosynthesis of branched-chain amino acids. Catalyzes the dehydration of (2R,3R)-2,3-dihydroxy-3-methylpentanoate (2,3-dihydroxy-3-methylvalerate) into 2-oxo-3-methylpentanoate (2-oxo-3-methylvalerate) and of (2R)-2,3-dihydroxy-3-methylbutanoate (2,3-dihydroxyisovalerate) into 2-oxo-3-methylbutanoate (2-oxoisovalerate), the penultimate precursor to L-isoleucine and L-valine, respectively. The chain is Dihydroxy-acid dehydratase from Campylobacter lari (strain RM2100 / D67 / ATCC BAA-1060).